Reading from the N-terminus, the 92-residue chain is Large ribosomal subunit protein bL36m (92 aa).

Residues Met-1 to Gly-54 constitute a mitochondrion transit peptide.

It belongs to the bacterial ribosomal protein bL36 family. Component of the mitochondrial large ribosomal subunit (mt-LSU). Mature yeast 74S mitochondrial ribosomes consist of a small (37S) and a large (54S) subunit. The 37S small subunit contains a 15S ribosomal RNA (15S mt-rRNA) and at least 32 different proteins. The 54S large subunit contains a 21S rRNA (21S mt-rRNA) and at least 45 different proteins. bL36m has a zinc binding site.

The protein localises to the mitochondrion. Functionally, component of the mitochondrial ribosome (mitoribosome), a dedicated translation machinery responsible for the synthesis of mitochondrial genome-encoded proteins, including at least some of the essential transmembrane subunits of the mitochondrial respiratory chain. The mitoribosomes are attached to the mitochondrial inner membrane and translation products are cotranslationally integrated into the membrane. bL36m may be involved in a process influencing telomere capping. In Schizosaccharomyces pombe (strain 972 / ATCC 24843) (Fission yeast), this protein is Large ribosomal subunit protein bL36m (rtc6).